The following is a 605-amino-acid chain: Tungsten-containing aldehyde ferredoxin oxidoreductase (605 aa).

Positions 76, 93, 95, 182, 183, 185, and 186 each coordinate tungstopterin. Residues C288, C291, and C295 each coordinate [4Fe-4S] cluster. Tungstopterin contacts are provided by D338, L342, D343, R444, K450, D489, and L493. A [4Fe-4S] cluster-binding site is contributed by C494. Tungstopterin is bound at residue L495.

This sequence belongs to the AOR/FOR family. Monomer. Homodimer. It depends on [4Fe-4S] cluster as a cofactor. Tungstopterin is required as a cofactor.

It carries out the reaction an aldehyde + 2 oxidized [2Fe-2S]-[ferredoxin] + H2O = a carboxylate + 2 reduced [2Fe-2S]-[ferredoxin] + 3 H(+). Inhibited by arsenite, iodoacetate and cyanide. Its function is as follows. Aldehyde ferredoxin oxidoreductase with a broad substrate specificity. Catalyzes the oxidation of a range of aliphatic aldehydes to their corresponding carboxylic acids. In vitro can use crotonaldehyde, acetaldehyde, formaldehyde, butyraldehyde or glyceraldehyde as substrate, using methyl viologen or ferredoxin, but not NAD(P), as the electron acceptor. Does not oxidize glucose or glyceraldehyde 3-phosphate. May be involved in a pyroglycolytic pathway. The protein is Tungsten-containing aldehyde ferredoxin oxidoreductase of Pyrococcus furiosus (strain ATCC 43587 / DSM 3638 / JCM 8422 / Vc1).